Reading from the N-terminus, the 238-residue chain is Riboflavin synthase (238 aa).

Lumazine-binding repeat units lie at residues 1-103 (MFTG…FGGH) and 104-205 (YVQG…EKQI). 2,4-dihydroxypteridine contacts are provided by residues 4 to 6 (GIV), 54 to 56 (CLT), and 68 to 73 (GISPET). Ser-95 carries the phosphoserine modification. Residues 107 to 109 (GHV), Lys-143, 152 to 154 (SLT), and 170 to 175 (SMIKHT) each bind 2,4-dihydroxypteridine.

In terms of assembly, homotrimer.

The enzyme catalyses 2 6,7-dimethyl-8-(1-D-ribityl)lumazine + H(+) = 5-amino-6-(D-ribitylamino)uracil + riboflavin. It participates in cofactor biosynthesis; riboflavin biosynthesis; riboflavin from 2-hydroxy-3-oxobutyl phosphate and 5-amino-6-(D-ribitylamino)uracil: step 2/2. Its function is as follows. Catalyzes the dismutation of two molecules of 6,7-dimethyl-8-ribityllumazine, resulting in the formation of riboflavin and 5-amino-6-(D-ribitylamino)uracil. In Saccharomyces cerevisiae (strain ATCC 204508 / S288c) (Baker's yeast), this protein is Riboflavin synthase.